The chain runs to 103 residues: Protein Rev (103 aa).

Ser-5 carries the post-translational modification Phosphoserine; by host CK2. A homomultimerization region spans residues 18-26 (VIKILYQSN). The segment covering 25–34 (SNPYPNDSGT) has biased composition (polar residues). 2 disordered regions span residues 25 to 48 (SNPY…WRAR) and 66 to 103 (GLQE…TATT). Residues 34–50 (TRQARKNRRRRWRARQR) carry the Nuclear localization signal and RNA-binding (RRE) motif. Positions 36–48 (QARKNRRRRWRAR) are enriched in basic residues. The Nuclear export signal and binding to XPO1 motif lies at 73–84 (LPLPPLDRLSLN). Ser-92 is subject to Phosphoserine; by host.

It belongs to the HIV-1 REV protein family. Homomultimer; when bound to the RRE. Multimeric assembly is essential for activity and may involve XPO1. Binds to human KPNB1, XPO1, TNPO1, RANBP5 and IPO7. Interacts with the viral Integrase. Interacts with human KHDRBS1. Interacts with human NAP1; this interaction decreases Rev multimerization and stimulates its activity. Interacts with human DEAD-box helicases DDX3 and DDX24; these interactions may serve for viral RNA export to the cytoplasm and packaging, respectively. Interacts with human PSIP1; this interaction may inhibit HIV-1 DNA integration by promoting dissociation of the Integrase-LEDGF/p75 complex. Post-translationally, asymmetrically arginine dimethylated at one site by host PRMT6. Methylation impairs the RNA-binding activity and export of viral RNA from the nucleus to the cytoplasm. In terms of processing, phosphorylated by protein kinase CK2. Presence of, and maybe binding to the N-terminus of the regulatory beta subunit of CK2 is necessary for CK2-mediated Rev's phosphorylation.

It is found in the host nucleus. Its subcellular location is the host nucleolus. It localises to the host cytoplasm. Its function is as follows. Escorts unspliced or incompletely spliced viral pre-mRNAs (late transcripts) out of the nucleus of infected cells. These pre-mRNAs carry a recognition sequence called Rev responsive element (RRE) located in the env gene, that is not present in fully spliced viral mRNAs (early transcripts). This function is essential since most viral proteins are translated from unspliced or partially spliced pre-mRNAs which cannot exit the nucleus by the pathway used by fully processed cellular mRNAs. Rev itself is translated from a fully spliced mRNA that readily exits the nucleus. Rev's nuclear localization signal (NLS) binds directly to KPNB1/Importin beta-1 without previous binding to KPNA1/Importin alpha-1. KPNB1 binds to the GDP bound form of RAN (Ran-GDP) and targets Rev to the nucleus. In the nucleus, the conversion from Ran-GDP to Ran-GTP dissociates Rev from KPNB1 and allows Rev's binding to the RRE in viral pre-mRNAs. Rev multimerization on the RRE via cooperative assembly exposes its nuclear export signal (NES) to the surface. Rev can then form a complex with XPO1/CRM1 and Ran-GTP, leading to nuclear export of the complex. Conversion from Ran-GTP to Ran-GDP mediates dissociation of the Rev/RRE/XPO1/RAN complex, so that Rev can return to the nucleus for a subsequent round of export. Beside KPNB1, also seems to interact with TNPO1/Transportin-1, RANBP5/IPO5 and IPO7/RANBP7 for nuclear import. The nucleoporin-like HRB/RIP is an essential cofactor that probably indirectly interacts with Rev to release HIV RNAs from the perinuclear region to the cytoplasm. The polypeptide is Protein Rev (Pan troglodytes (Chimpanzee)).